A 117-amino-acid chain; its full sequence is MTTNKTAKIQFYEGTDEPVVPEIRLTRSKDGTTGQALFLFEKPQALSSITDGEITGMRMIDSEGEILTREVKVKFVDGEPIFLEAVYIWKNTPDFDRFMRFANSYAKSNGLGYSEKK.

This sequence belongs to the Psb28 family. In terms of assembly, part of the photosystem II complex.

It localises to the cellular thylakoid membrane. The sequence is that of Photosystem II reaction center Psb28 protein from Prochlorococcus marinus (strain MIT 9301).